Here is a 415-residue protein sequence, read N- to C-terminus: Glutamate-1-semialdehyde 2,1-aminomutase (415 aa).

Lys260 carries the N6-(pyridoxal phosphate)lysine modification.

This sequence belongs to the class-III pyridoxal-phosphate-dependent aminotransferase family. HemL subfamily. Requires pyridoxal 5'-phosphate as cofactor.

The protein resides in the cytoplasm. It carries out the reaction (S)-4-amino-5-oxopentanoate = 5-aminolevulinate. Its pathway is porphyrin-containing compound metabolism; protoporphyrin-IX biosynthesis; 5-aminolevulinate from L-glutamyl-tRNA(Glu): step 2/2. The sequence is that of Glutamate-1-semialdehyde 2,1-aminomutase from Methanoculleus marisnigri (strain ATCC 35101 / DSM 1498 / JR1).